Reading from the N-terminus, the 258-residue chain is Proliferating cell nuclear antigen (258 aa).

A DNA-binding region spans residues 61-80 (RCDHPVTLGMDLTSLSKILR). A Glycyl lysine isopeptide (Lys-Gly) (interchain with G-Cter in SUMO) cross-link involves residue lysine 127. Residue lysine 164 forms a Glycyl lysine isopeptide (Lys-Gly) (interchain with G-Cter in SUMO); alternate linkage. Lysine 164 participates in a covalent cross-link: Glycyl lysine isopeptide (Lys-Gly) (interchain with G-Cter in ubiquitin); alternate.

It belongs to the PCNA family. In terms of assembly, homotrimer. Interacts with RAD30. Interacts with MCM10. Interacts with UBP10. Sumoylated on Lys-164, and to a lesser extent on Lys-127 by the UBC9/SIZ1 complex during S-phase; which impairs ubiquitination and function in DNA repair. In terms of processing, monoubiquitinated on Lys-164 by the UBC2/RAD18 complex upon DNA damage, and then polyubiquitinated through 'Lys-63'-linkage by UBC13/MMS2. Ubiquitination is required for UBC2-mediated DNA repair. Post-translationally, lys-164 is deubiquitinated by UBP10.

Its subcellular location is the nucleus. This protein is an auxiliary protein of DNA polymerase delta and is involved in the control of eukaryotic DNA replication by increasing the polymerase's processibility during elongation of the leading strand. Involved in DNA repair. The protein is Proliferating cell nuclear antigen (POL30) of Saccharomyces cerevisiae (strain ATCC 204508 / S288c) (Baker's yeast).